The sequence spans 85 residues: Conotoxin Lt28.4 (85 aa).

The signal sequence occupies residues 1–21; the sequence is MPKLEMMLLVLLILPLCYIDA. Residues 22 to 40 constitute a propeptide that is removed on maturation; that stretch reads VGPPPPWNMEDEIIEHWQK.

This sequence belongs to the conotoxin D superfamily. In terms of processing, contains 5 disulfide bonds. Expressed by the venom duct.

The protein localises to the secreted. In terms of biological role, probable neurotoxin. This chain is Conotoxin Lt28.4, found in Conus litteratus (Lettered cone).